The chain runs to 98 residues: MSLVYMNIMTAFAVSLTGLLMYRSHLMSSLLCLEGMMLSLFIMATLMILNSHFTLASMMPIILLVFAACEAALGLSLLVMVSNTYGTDYVQNLNLLQC.

A run of 3 helical transmembrane segments spans residues 1–21 (MSLV…GLLM), 29–49 (SLLC…LMIL), and 61–81 (IILL…LVMV).

This sequence belongs to the complex I subunit 4L family. Core subunit of respiratory chain NADH dehydrogenase (Complex I) which is composed of 45 different subunits.

The protein resides in the mitochondrion inner membrane. The enzyme catalyses a ubiquinone + NADH + 5 H(+)(in) = a ubiquinol + NAD(+) + 4 H(+)(out). Functionally, core subunit of the mitochondrial membrane respiratory chain NADH dehydrogenase (Complex I) which catalyzes electron transfer from NADH through the respiratory chain, using ubiquinone as an electron acceptor. Part of the enzyme membrane arm which is embedded in the lipid bilayer and involved in proton translocation. In Capra hircus (Goat), this protein is NADH-ubiquinone oxidoreductase chain 4L (MT-ND4L).